The sequence spans 301 residues: Homoserine O-acetyltransferase (301 aa).

Cysteine 142 acts as the Acyl-thioester intermediate in catalysis. Residues lysine 163 and serine 192 each contribute to the substrate site. Catalysis depends on histidine 235, which acts as the Proton acceptor. Glutamate 237 is an active-site residue. Residue arginine 249 coordinates substrate.

Belongs to the MetA family.

The protein resides in the cytoplasm. It catalyses the reaction L-homoserine + acetyl-CoA = O-acetyl-L-homoserine + CoA. The protein operates within amino-acid biosynthesis; L-methionine biosynthesis via de novo pathway; O-acetyl-L-homoserine from L-homoserine: step 1/1. In terms of biological role, transfers an acetyl group from acetyl-CoA to L-homoserine, forming acetyl-L-homoserine. This Bacillus cereus (strain ATCC 14579 / DSM 31 / CCUG 7414 / JCM 2152 / NBRC 15305 / NCIMB 9373 / NCTC 2599 / NRRL B-3711) protein is Homoserine O-acetyltransferase.